The following is a 412-amino-acid chain: Aspartate kinase Ask_LysC (412 aa).

The region spanning 265-332 (LTIRGVPDTP…QGIAAEMGAR (68 aa)) is the ACT domain.

The protein belongs to the aspartokinase family.

Its subcellular location is the cytoplasm. The enzyme catalyses L-aspartate + ATP = 4-phospho-L-aspartate + ADP. It participates in amino-acid biosynthesis; L-lysine biosynthesis via DAP pathway; (S)-tetrahydrodipicolinate from L-aspartate: step 1/4. It functions in the pathway amino-acid biosynthesis; L-methionine biosynthesis via de novo pathway; L-homoserine from L-aspartate: step 1/3. Its pathway is amino-acid biosynthesis; L-threonine biosynthesis; L-threonine from L-aspartate: step 1/5. Allosterically and strongly feedback inhibited by tryptophan. Addition of lysine alone slightly enhances activity. The simultaneous addition of lysine and tryptophan leads to very strong feedback inhibition of the enzyme. The feedback control by tryptophan is reduced in the presence of the compatible solutes hydroxyectoine or ectoine. Functionally, involved in the biosynthesis of L-aspartate-beta-semialdehyde which is a central intermediate in the biosynthesis of different amino acids (L-lysine, L-methionine, L-threonine). Catalyzes the phosphorylation of the beta-carboxyl group of L-aspartate to yield 4-phospho-L-aspartate. The polypeptide is Aspartate kinase Ask_LysC (lysC) (Stutzerimonas stutzeri (strain A1501) (Pseudomonas stutzeri)).